The sequence spans 376 residues: Protein STRICTOSIDINE SYNTHASE-LIKE 8 (376 aa).

Positions 1–31 (MPISRRVLTPITAAPVILAVLCFFFWSSIIG) are cleaved as a signal peptide. N-linked (GlcNAc...) asparagine glycosylation is found at Asn-98, Asn-172, and Asn-224.

It belongs to the strictosidine synthase family.

It is found in the vacuole. This Arabidopsis thaliana (Mouse-ear cress) protein is Protein STRICTOSIDINE SYNTHASE-LIKE 8.